The following is a 161-amino-acid chain: Vasotocin-neurophysin VT (161 aa).

An N-terminal signal peptide occupies residues 1–22 (MSAMGWTLLAAALLAISAQSNG). A disulfide bond links Cys-23 and Cys-28. Residue Gly-31 is modified to Glycine amide. Intrachain disulfides connect Cys-43/Cys-91, Cys-46/Cys-58, Cys-52/Cys-81, Cys-59/Cys-71, Cys-99/Cys-111, Cys-105/Cys-123, and Cys-112/Cys-117.

Belongs to the vasopressin/oxytocin family.

The protein resides in the secreted. Vasotocin is an antidiuretic hormone. The protein is Vasotocin-neurophysin VT of Eptatretus stoutii (Pacific hagfish).